A 1542-amino-acid polypeptide reads, in one-letter code: ABC multidrug transporter AFR1 (1542 aa).

2 disordered regions span residues 1–84 (MSAA…LPAD) and 118–141 (SQQS…FSRK). A compositionally biased stretch (polar residues) spans 18–41 (TATTQNPSGLANSQVTSDPVPSAT). Over residues 60 to 69 (DKSVDAEKVE) the composition is skewed to basic and acidic residues. Residues Asn-207 and Asn-397 are each glycosylated (N-linked (GlcNAc...) asparagine). An ABC transporter 1 domain is found at 221–473 (LKVLGIFGVN…MIGLGYRDLP (253 aa)). Transmembrane regions (helical) follow at residues 584–604 (FGIS…GSVY), 618–638 (GGLL…ELPS), 669–689 (VPYN…MGGL), 694–714 (GAFF…SAFF), and 726–746 (VAAR…GYMI). Residue Asn-822 is glycosylated (N-linked (GlcNAc...) asparagine). A helical membrane pass occupies residues 844–864 (FGILVGFFAFFMFLQMMFIEY). The ABC transporter 2 domain occupies 917–1159 (FTWEGLNYTV…VLIDYLERNG (243 aa)). N-linked (GlcNAc...) asparagine glycosylation occurs at Asn-923. Residue 953–960 (GASGAGKT) participates in ATP binding. Transmembrane regions (helical) follow at residues 1253–1273 (WTRL…FLQL), 1284–1304 (VFAI…IEPQ), 1335–1355 (MPYS…GVGF), 1365–1385 (FFLM…AVAA), 1390–1410 (ILIA…FCGV), and 1516–1536 (FGIF…AARF).

The protein belongs to the ABC transporter superfamily. ABCG family. PDR (TC 3.A.1.205) subfamily.

Its subcellular location is the cell membrane. The catalysed reaction is itraconazole(in) + ATP + H2O = itraconazole(out) + ADP + phosphate + H(+). It carries out the reaction voriconazole(in) + ATP + H2O = voriconazole(out) + ADP + phosphate + H(+). The enzyme catalyses fluconazole(in) + ATP + H2O = fluconazole(out) + ADP + phosphate + H(+). Functionally, major pleiotropic ABC efflux transporter that confers resistance to structurally and functionally unrelated compounds including azoles such as fluconazole (FLC), itraconazole (ITC), posaconazole (POS), and voriconazole (VRC). Is also able to efflux the eukaryote protein synthesis inhibitor cycloheximide (CHX). This Cryptococcus deuterogattii (strain R265) (Cryptococcus gattii VGII (strain R265)) protein is ABC multidrug transporter AFR1.